The primary structure comprises 562 residues: Arginine--tRNA ligase 1 (562 aa).

The short motif at 122 to 132 (PNIAKPFSMGH) is the 'HIGH' region element.

It belongs to the class-I aminoacyl-tRNA synthetase family. As to quaternary structure, monomer.

It localises to the cytoplasm. The enzyme catalyses tRNA(Arg) + L-arginine + ATP = L-arginyl-tRNA(Arg) + AMP + diphosphate. In Bacillus cereus (strain ZK / E33L), this protein is Arginine--tRNA ligase 1.